The primary structure comprises 316 residues: 4-hydroxy-3-methylbut-2-enyl diphosphate reductase (316 aa).

Residue cysteine 17 participates in [4Fe-4S] cluster binding. Residues histidine 46 and histidine 79 each coordinate (2E)-4-hydroxy-3-methylbut-2-enyl diphosphate. Dimethylallyl diphosphate is bound by residues histidine 46 and histidine 79. Residues histidine 46 and histidine 79 each contribute to the isopentenyl diphosphate site. Residue cysteine 101 coordinates [4Fe-4S] cluster. Residue histidine 129 coordinates (2E)-4-hydroxy-3-methylbut-2-enyl diphosphate. A dimethylallyl diphosphate-binding site is contributed by histidine 129. Histidine 129 contacts isopentenyl diphosphate. Residue glutamate 131 is the Proton donor of the active site. Residue threonine 170 coordinates (2E)-4-hydroxy-3-methylbut-2-enyl diphosphate. Cysteine 200 is a binding site for [4Fe-4S] cluster. (2E)-4-hydroxy-3-methylbut-2-enyl diphosphate is bound by residues serine 228, serine 229, asparagine 230, and serine 273. Dimethylallyl diphosphate is bound by residues serine 228, serine 229, asparagine 230, and serine 273. Positions 228, 229, 230, and 273 each coordinate isopentenyl diphosphate.

This sequence belongs to the IspH family. The cofactor is [4Fe-4S] cluster.

It catalyses the reaction isopentenyl diphosphate + 2 oxidized [2Fe-2S]-[ferredoxin] + H2O = (2E)-4-hydroxy-3-methylbut-2-enyl diphosphate + 2 reduced [2Fe-2S]-[ferredoxin] + 2 H(+). It carries out the reaction dimethylallyl diphosphate + 2 oxidized [2Fe-2S]-[ferredoxin] + H2O = (2E)-4-hydroxy-3-methylbut-2-enyl diphosphate + 2 reduced [2Fe-2S]-[ferredoxin] + 2 H(+). It functions in the pathway isoprenoid biosynthesis; dimethylallyl diphosphate biosynthesis; dimethylallyl diphosphate from (2E)-4-hydroxy-3-methylbutenyl diphosphate: step 1/1. It participates in isoprenoid biosynthesis; isopentenyl diphosphate biosynthesis via DXP pathway; isopentenyl diphosphate from 1-deoxy-D-xylulose 5-phosphate: step 6/6. In terms of biological role, catalyzes the conversion of 1-hydroxy-2-methyl-2-(E)-butenyl 4-diphosphate (HMBPP) into a mixture of isopentenyl diphosphate (IPP) and dimethylallyl diphosphate (DMAPP). Acts in the terminal step of the DOXP/MEP pathway for isoprenoid precursor biosynthesis. In Ruegeria pomeroyi (strain ATCC 700808 / DSM 15171 / DSS-3) (Silicibacter pomeroyi), this protein is 4-hydroxy-3-methylbut-2-enyl diphosphate reductase.